The sequence spans 100 residues: MIPLQHGLILSAILFVLGLTGLVIRRNLLFMLIGLEIMINASALAFVVAGSYWGQTDGQVMYILAISLAAAEASIGLALLLQLHRRRQNLNIDSVSEMRG.

A run of 3 helical transmembrane segments spans residues 4-24, 28-48, and 60-80; these read LQHG…GLVI, LLFM…AFVV, and VMYI…LALL.

Belongs to the complex I subunit 4L family. NDH-1 is composed of 13 different subunits. Subunits NuoA, H, J, K, L, M, N constitute the membrane sector of the complex.

The protein resides in the cell inner membrane. It carries out the reaction a quinone + NADH + 5 H(+)(in) = a quinol + NAD(+) + 4 H(+)(out). In terms of biological role, NDH-1 shuttles electrons from NADH, via FMN and iron-sulfur (Fe-S) centers, to quinones in the respiratory chain. The immediate electron acceptor for the enzyme in this species is believed to be ubiquinone. Couples the redox reaction to proton translocation (for every two electrons transferred, four hydrogen ions are translocated across the cytoplasmic membrane), and thus conserves the redox energy in a proton gradient. This Shigella boydii serotype 18 (strain CDC 3083-94 / BS512) protein is NADH-quinone oxidoreductase subunit K.